The sequence spans 122 residues: Large ribosomal subunit protein uL14 (122 aa).

Belongs to the universal ribosomal protein uL14 family. In terms of assembly, part of the 50S ribosomal subunit. Forms a cluster with proteins L3 and L19. In the 70S ribosome, L14 and L19 interact and together make contacts with the 16S rRNA in bridges B5 and B8.

Its function is as follows. Binds to 23S rRNA. Forms part of two intersubunit bridges in the 70S ribosome. The protein is Large ribosomal subunit protein uL14 of Colwellia psychrerythraea (strain 34H / ATCC BAA-681) (Vibrio psychroerythus).